A 59-amino-acid chain; its full sequence is Inner kinetochore subunit fta6 (59 aa).

Component of the inner kinetochore constitutive centromere-associated network (CCAN) (also known as central kinetochore Sim4 complex in fission yeast), which is composed of at least cnl2, cnp3, cnp20, fta1, fta2, fta3, fta4, fta6, fta7, mal2, mhf1, mhf2, mis6, mis15, mis17, sim4 and wip1.

The protein resides in the nucleus. It is found in the chromosome. The protein localises to the centromere. Its subcellular location is the kinetochore. It localises to the cytoplasm. The protein resides in the cytoskeleton. It is found in the microtubule organizing center. The protein localises to the spindle pole body. Component of the kinetochore, a multiprotein complex that assembles on centromeric DNA and attaches chromosomes to spindle microtubules, mediating chromosome segregation and sister chromatid segregation during meiosis and mitosis. Component of the inner kinetochore constitutive centromere-associated network (CCAN), which serves as a structural platform for outer kinetochore assembly. The chain is Inner kinetochore subunit fta6 (fta6) from Schizosaccharomyces pombe (strain 972 / ATCC 24843) (Fission yeast).